The chain runs to 748 residues: Holliday junction recognition protein (748 aa).

Phosphoserine occurs at positions 123, 140, 185, 201, and 211. Residues 191 to 226 (PGYCSRISRKSPGDPAKPASSPREWDPLHPSSTDMA) form a disordered region. K354 is covalently cross-linked (Glycyl lysine isopeptide (Lys-Gly) (interchain with G-Cter in SUMO2)). S412, S448, and S473 each carry phosphoserine. S486 is subject to Phosphoserine; by PKB/AKT1. The residue at position 496 (S496) is a Phosphoserine. Residues 512–574 (GRCLPKSDSS…PDKEVPGHGR (63 aa)) form a disordered region. The segment covering 524–562 (LPKTNPTHSATRPQQTSDLHVQGNSSGIFRKSVSPSKTL) has biased composition (polar residues). The segment covering 565 to 574 (PDKEVPGHGR) has biased composition (basic and acidic residues). Glycyl lysine isopeptide (Lys-Gly) (interchain with G-Cter in SUMO2) cross-links involve residues K581 and K586. Phosphoserine is present on residues S595 and S642. The disordered stretch occupies residues 670–748 (RDGTRDHQFP…MLEKLETKSV (79 aa)). Polar residues predominate over residues 688–699 (PQGSGRQGNSLG). Positions 721–748 (SEERGENTSYRMEEKSDFMLEKLETKSV) are enriched in basic and acidic residues.

Interacts with CENPA (via CATD domain); the interaction is direct and specific for CENPA since it does not interact with H3.1- or H3.3-containing nucleosomes. Heterotrimer composed of HJURP, CENPA and histone H4, where HJURP interacts with the dimer formed by CENPA and histone H4 and prevents tetramerization of CENPA and H4. Identified in a centromere complex containing histones H2A, H2B and H4, and at least CENPA, CENPB, CENPC, CENPT, CENPN, HJURP, SUPT16H, SSRP1 and RSF1. Interacts with 14-3-3 family members in a phosphorylation-dependent manner. Interacts with MSH5 and NBN. In terms of tissue distribution, according to PubMed:17256767, highly expressed in the thymus with lower levels in the placenta, small intestine, liver, skeletal muscle, and colon. According to PubMed:17823411, highly expressed in testis, and at a relatively lower level in thymus and bone marrow. Significantly overexpressed in many lung cancer samples, compared with normal lung.

The protein resides in the nucleus. It localises to the nucleolus. It is found in the chromosome. Its subcellular location is the centromere. Its function is as follows. Centromeric protein that plays a central role in the incorporation and maintenance of histone H3-like variant CENPA at centromeres. Acts as a specific chaperone for CENPA and is required for the incorporation of newly synthesized CENPA molecules into nucleosomes at replicated centromeres. Prevents CENPA-H4 tetramerization and prevents premature DNA binding by the CENPA-H4 tetramer. Directly binds Holliday junctions. This is Holliday junction recognition protein (HJURP) from Homo sapiens (Human).